We begin with the raw amino-acid sequence, 110 residues long: V-type proton ATPase subunit G1 (110 aa).

Residue M1 is modified to N-acetylmethionine. The segment at 60–80 (KLEETSGDSGANVKRLEQETD) is disordered.

The protein belongs to the V-ATPase G subunit family. As to quaternary structure, V-ATPase is a heteromultimeric enzyme composed of a peripheral catalytic V1 complex (components A to H) attached to an integral membrane V0 proton pore complex (components: a, c, c'', d and e).

Its subcellular location is the cell membrane. The protein resides in the vacuole membrane. Its function is as follows. Catalytic subunit of the peripheral V1 complex of vacuolar ATPase (V-ATPase). V-ATPase is responsible for acidifying a variety of intracellular compartments in eukaryotic cells. The sequence is that of V-type proton ATPase subunit G1 (VHA-G1) from Arabidopsis thaliana (Mouse-ear cress).